The chain runs to 100 residues: Aspartyl/glutamyl-tRNA(Asn/Gln) amidotransferase subunit C (100 aa).

This sequence belongs to the GatC family. Heterotrimer of A, B and C subunits.

It carries out the reaction L-glutamyl-tRNA(Gln) + L-glutamine + ATP + H2O = L-glutaminyl-tRNA(Gln) + L-glutamate + ADP + phosphate + H(+). It catalyses the reaction L-aspartyl-tRNA(Asn) + L-glutamine + ATP + H2O = L-asparaginyl-tRNA(Asn) + L-glutamate + ADP + phosphate + 2 H(+). Allows the formation of correctly charged Asn-tRNA(Asn) or Gln-tRNA(Gln) through the transamidation of misacylated Asp-tRNA(Asn) or Glu-tRNA(Gln) in organisms which lack either or both of asparaginyl-tRNA or glutaminyl-tRNA synthetases. The reaction takes place in the presence of glutamine and ATP through an activated phospho-Asp-tRNA(Asn) or phospho-Glu-tRNA(Gln). The polypeptide is Aspartyl/glutamyl-tRNA(Asn/Gln) amidotransferase subunit C (Streptococcus sanguinis (strain SK36)).